The sequence spans 193 residues: Phosphoheptose isomerase (193 aa).

The SIS domain maps to 37 to 193; sequence LADSFKAGGK…QLIEKEMVKA (157 aa). 52-54 is a substrate binding site; sequence NGG. Residues His61 and Glu65 each coordinate Zn(2+). Residues Glu65, 93–94, 119–121, Ser124, and Gln172 each bind substrate; these read ND and STS. Zn(2+) is bound by residues Gln172 and His180.

This sequence belongs to the SIS family. GmhA subfamily. Homotetramer. Zn(2+) serves as cofactor.

It is found in the cytoplasm. It carries out the reaction 2 D-sedoheptulose 7-phosphate = D-glycero-alpha-D-manno-heptose 7-phosphate + D-glycero-beta-D-manno-heptose 7-phosphate. It functions in the pathway carbohydrate biosynthesis; D-glycero-D-manno-heptose 7-phosphate biosynthesis; D-glycero-alpha-D-manno-heptose 7-phosphate and D-glycero-beta-D-manno-heptose 7-phosphate from sedoheptulose 7-phosphate: step 1/1. It participates in bacterial outer membrane biogenesis; LPS core biosynthesis. In terms of biological role, catalyzes the isomerization of sedoheptulose 7-phosphate in D-glycero-D-manno-heptose 7-phosphate. This Yersinia pestis protein is Phosphoheptose isomerase.